We begin with the raw amino-acid sequence, 272 residues long: 3-methyl-2-oxobutanoate hydroxymethyltransferase (272 aa).

Mg(2+) is bound by residues aspartate 43 and aspartate 82. 3-methyl-2-oxobutanoate contacts are provided by residues 43–44, aspartate 82, and lysine 112; that span reads DS. Mg(2+) is bound at residue glutamate 114. The Proton acceptor role is filled by glutamate 179.

It belongs to the PanB family. Homodecamer; pentamer of dimers. Mg(2+) serves as cofactor.

It localises to the cytoplasm. The catalysed reaction is 3-methyl-2-oxobutanoate + (6R)-5,10-methylene-5,6,7,8-tetrahydrofolate + H2O = 2-dehydropantoate + (6S)-5,6,7,8-tetrahydrofolate. It functions in the pathway cofactor biosynthesis; (R)-pantothenate biosynthesis; (R)-pantoate from 3-methyl-2-oxobutanoate: step 1/2. Functionally, catalyzes the reversible reaction in which hydroxymethyl group from 5,10-methylenetetrahydrofolate is transferred onto alpha-ketoisovalerate to form ketopantoate. This Staphylococcus aureus (strain Newman) protein is 3-methyl-2-oxobutanoate hydroxymethyltransferase.